Consider the following 296-residue polypeptide: MSISWWEISVLCHPNLEESIFWRLDQFGCSGTARETKGKSFLIRAYVPKMQAQTLDLAALSLWLKQDAILLDSPPPLTHWKLIDDEDWASSWKDHWQPTEVGDRFLIYPAWLTLPQDGDRLILRLDPGAAFGTGTHPTTQLCLESLEMRLSVPNKEIIIADIGCGSGILSIGAVLLGATKVYAVDIDPLAVDAARSNRHLNQIHPATLVINQGSVAEVLELAPEGVDGILCNILAEVIIELIPQWTALAKPHAWAILSGILIDQSQAIADTLEQYGWVVAALWKQGEWSCLHVRRS.

The S-adenosyl-L-methionine site is built by Thr-139, Gly-163, Asp-185, and Asn-232.

Belongs to the methyltransferase superfamily. PrmA family.

It is found in the cytoplasm. It catalyses the reaction L-lysyl-[protein] + 3 S-adenosyl-L-methionine = N(6),N(6),N(6)-trimethyl-L-lysyl-[protein] + 3 S-adenosyl-L-homocysteine + 3 H(+). Its function is as follows. Methylates ribosomal protein L11. The polypeptide is Ribosomal protein L11 methyltransferase (Rippkaea orientalis (strain PCC 8801 / RF-1) (Cyanothece sp. (strain PCC 8801))).